A 409-amino-acid chain; its full sequence is Peptidase T (409 aa).

Histidine 78 contributes to the Zn(2+) binding site. Aspartate 80 is a catalytic residue. A Zn(2+)-binding site is contributed by aspartate 140. Residue glutamate 173 is the Proton acceptor of the active site. The Zn(2+) site is built by glutamate 174, aspartate 196, and histidine 379.

Belongs to the peptidase M20B family. Zn(2+) serves as cofactor.

It is found in the cytoplasm. It carries out the reaction Release of the N-terminal residue from a tripeptide.. Its function is as follows. Cleaves the N-terminal amino acid of tripeptides. The chain is Peptidase T from Escherichia coli (strain SE11).